We begin with the raw amino-acid sequence, 222 residues long: Large ribosomal subunit protein uL1 (222 aa).

The protein belongs to the universal ribosomal protein uL1 family. In terms of assembly, part of the 50S ribosomal subunit.

Binds directly to 23S rRNA. Probably involved in E site tRNA release. In terms of biological role, protein L1 is also a translational repressor protein, it controls the translation of its operon by binding to its mRNA. The protein is Large ribosomal subunit protein uL1 of Pyrobaculum islandicum (strain DSM 4184 / JCM 9189 / GEO3).